A 247-amino-acid polypeptide reads, in one-letter code: Adenosylcobinamide-GDP ribazoletransferase (247 aa).

A run of 5 helical transmembrane segments spans residues 34–54, 59–79, 113–133, 138–158, and 187–207; these read IVMF…IFIL, CGIP…TGGF, GGLA…ELAL, MLAA…LLMY, and LAVI…AMVV.

The protein belongs to the CobS family. Mg(2+) serves as cofactor.

Its subcellular location is the cell inner membrane. The catalysed reaction is alpha-ribazole + adenosylcob(III)inamide-GDP = adenosylcob(III)alamin + GMP + H(+). It catalyses the reaction alpha-ribazole 5'-phosphate + adenosylcob(III)inamide-GDP = adenosylcob(III)alamin 5'-phosphate + GMP + H(+). Its pathway is cofactor biosynthesis; adenosylcobalamin biosynthesis; adenosylcobalamin from cob(II)yrinate a,c-diamide: step 7/7. Its function is as follows. Joins adenosylcobinamide-GDP and alpha-ribazole to generate adenosylcobalamin (Ado-cobalamin). Also synthesizes adenosylcobalamin 5'-phosphate from adenosylcobinamide-GDP and alpha-ribazole 5'-phosphate. The chain is Adenosylcobinamide-GDP ribazoletransferase from Salmonella choleraesuis (strain SC-B67).